Here is a 359-residue protein sequence, read N- to C-terminus: 4-hydroxy-3-methylbut-2-en-1-yl diphosphate synthase (flavodoxin) (359 aa).

The [4Fe-4S] cluster site is built by C264, C267, C299, and E306.

This sequence belongs to the IspG family. It depends on [4Fe-4S] cluster as a cofactor.

It carries out the reaction (2E)-4-hydroxy-3-methylbut-2-enyl diphosphate + oxidized [flavodoxin] + H2O + 2 H(+) = 2-C-methyl-D-erythritol 2,4-cyclic diphosphate + reduced [flavodoxin]. It functions in the pathway isoprenoid biosynthesis; isopentenyl diphosphate biosynthesis via DXP pathway; isopentenyl diphosphate from 1-deoxy-D-xylulose 5-phosphate: step 5/6. In terms of biological role, converts 2C-methyl-D-erythritol 2,4-cyclodiphosphate (ME-2,4cPP) into 1-hydroxy-2-methyl-2-(E)-butenyl 4-diphosphate. This chain is 4-hydroxy-3-methylbut-2-en-1-yl diphosphate synthase (flavodoxin), found in Helicobacter pylori (strain G27).